Here is a 228-residue protein sequence, read N- to C-terminus: 7-cyano-7-deazaguanine synthase (228 aa).

Leu11–Leu21 is a binding site for ATP. Residues Cys191, Cys201, Cys204, and Cys207 each coordinate Zn(2+).

This sequence belongs to the QueC family. The cofactor is Zn(2+).

The catalysed reaction is 7-carboxy-7-deazaguanine + NH4(+) + ATP = 7-cyano-7-deazaguanine + ADP + phosphate + H2O + H(+). Its pathway is purine metabolism; 7-cyano-7-deazaguanine biosynthesis. In terms of biological role, catalyzes the ATP-dependent conversion of 7-carboxy-7-deazaguanine (CDG) to 7-cyano-7-deazaguanine (preQ(0)). This Magnetococcus marinus (strain ATCC BAA-1437 / JCM 17883 / MC-1) protein is 7-cyano-7-deazaguanine synthase.